The sequence spans 278 residues: MAIIKYKPTSNGRRNMSGSDFAEITKTKPEKTLLVSQSHTAGRNAHGHITVRHRGGGHKQFYRVIDFKRNKDGMAATVKAIEYDPNRTANIALLHYEDGVKSYILAPKGLKVGDKVYSGEDVDIKVGNSLQLKNIPAGTTIHNIELKPGKGAQLARSAGVSAQLLGKDNDKYVTVKLASGEVRLILAENRATIGAVGNEQHELISIGKAGRKRWLGFRPTVRGSVMNPNDHPHGGGEGKAPIGHPSPMSPWGKKTLGKKTRDHKAKSEKFIVRHRRAK.

The segment at 223–278 (GSVMNPNDHPHGGGEGKAPIGHPSPMSPWGKKTLGKKTRDHKAKSEKFIVRHRRAK) is disordered. Positions 255 to 264 (TLGKKTRDHK) are enriched in basic residues.

Belongs to the universal ribosomal protein uL2 family. As to quaternary structure, part of the 50S ribosomal subunit. Forms a bridge to the 30S subunit in the 70S ribosome.

Functionally, one of the primary rRNA binding proteins. Required for association of the 30S and 50S subunits to form the 70S ribosome, for tRNA binding and peptide bond formation. It has been suggested to have peptidyltransferase activity; this is somewhat controversial. Makes several contacts with the 16S rRNA in the 70S ribosome. The chain is Large ribosomal subunit protein uL2 from Lacticaseibacillus paracasei (strain ATCC 334 / BCRC 17002 / CCUG 31169 / CIP 107868 / KCTC 3260 / NRRL B-441) (Lactobacillus paracasei).